The following is a 186-amino-acid chain: TATA-box-binding protein (186 aa).

2 tandem repeats follow at residues Ile10–Leu86 and Val101–Leu179.

Belongs to the TBP family.

General factor that plays a role in the activation of archaeal genes transcribed by RNA polymerase. Binds specifically to the TATA box promoter element which lies close to the position of transcription initiation. In Haloarcula marismortui (strain ATCC 43049 / DSM 3752 / JCM 8966 / VKM B-1809) (Halobacterium marismortui), this protein is TATA-box-binding protein.